Reading from the N-terminus, the 263-residue chain is Endonuclease NucS (263 aa).

This sequence belongs to the NucS endonuclease family.

The protein resides in the cytoplasm. Cleaves both 3' and 5' ssDNA extremities of branched DNA structures. The polypeptide is Endonuclease NucS (Methanocaldococcus jannaschii (strain ATCC 43067 / DSM 2661 / JAL-1 / JCM 10045 / NBRC 100440) (Methanococcus jannaschii)).